A 468-amino-acid polypeptide reads, in one-letter code: ATP synthase subunit beta (468 aa).

An ATP-binding site is contributed by 148 to 155 (GGAGVGKT).

The protein belongs to the ATPase alpha/beta chains family. As to quaternary structure, F-type ATPases have 2 components, CF(1) - the catalytic core - and CF(0) - the membrane proton channel. CF(1) has five subunits: alpha(3), beta(3), gamma(1), delta(1), epsilon(1). CF(0) has three main subunits: a(1), b(2) and c(9-12). The alpha and beta chains form an alternating ring which encloses part of the gamma chain. CF(1) is attached to CF(0) by a central stalk formed by the gamma and epsilon chains, while a peripheral stalk is formed by the delta and b chains.

Its subcellular location is the cell inner membrane. It catalyses the reaction ATP + H2O + 4 H(+)(in) = ADP + phosphate + 5 H(+)(out). In terms of biological role, produces ATP from ADP in the presence of a proton gradient across the membrane. The catalytic sites are hosted primarily by the beta subunits. This is ATP synthase subunit beta from Xanthomonas euvesicatoria pv. vesicatoria (strain 85-10) (Xanthomonas campestris pv. vesicatoria).